The following is a 179-amino-acid chain: CASP-like protein 1F1 (179 aa).

Residues 1–16 lie on the Cytoplasmic side of the membrane; sequence MENVEDKYNSPLKSQK. Residues 17-37 form a helical membrane-spanning segment; sequence LFIGAQICLRIVTIGATLAAT. At 38 to 65 the chain is on the extracellular side; the sequence is WIMVTDKQSITFGDFVMVAKYNYSSAFK. A glycan (N-linked (GlcNAc...) asparagine) is linked at asparagine 59. A helical membrane pass occupies residues 66-86; the sequence is FFVLANVIACACSVVSLLFLC. Residues 87-105 are Cytoplasmic-facing; the sequence is ALGRYSSNPGHVFLLFLHD. A helical membrane pass occupies residues 106–126; that stretch reads LLMMSLVLAGCSAATAIGFLG. Residues 127–150 are Extracellular-facing; it reads KYGNTKSGWMPICDQFGQFCNRGT. Residues 151-171 form a helical membrane-spanning segment; it reads ISMMLSYLSMVCLLILTVTSA. At 172–179 the chain is on the cytoplasmic side; that stretch reads NKSRQIHV.

The protein belongs to the Casparian strip membrane proteins (CASP) family. As to quaternary structure, homodimer and heterodimers.

The protein resides in the cell membrane. This is CASP-like protein 1F1 from Ricinus communis (Castor bean).